A 92-amino-acid polypeptide reads, in one-letter code: Small ribosomal subunit protein bS20 (92 aa).

Residues M1–N21 are compositionally biased toward basic and acidic residues. Disordered stretches follow at residues M1 to K26 and A73 to S92. Positions K82–S92 are enriched in polar residues.

Belongs to the bacterial ribosomal protein bS20 family.

In terms of biological role, binds directly to 16S ribosomal RNA. This chain is Small ribosomal subunit protein bS20, found in Chlorobaculum tepidum (strain ATCC 49652 / DSM 12025 / NBRC 103806 / TLS) (Chlorobium tepidum).